Here is a 600-residue protein sequence, read N- to C-terminus: Estrogen receptor (600 aa).

The tract at residues 1–189 (MTMTLHTKAS…IMESAKETRY (189 aa)) is modulating (transactivation AF-1); mediates interaction with MACROD1. Residue Ser10 is glycosylated (O-linked (GlcNAc) serine). Residues 35–47 (MERALGEVYVDNS) form a required for interaction with NCOA1 region. The interaction with DDX5; self-association stretch occupies residues 35-179 (MERALGEVYV…LSSSSEKGNM (145 aa)). A phosphoserine; by CDK2 mark is found at Ser109 and Ser111. Ser123 is subject to Phosphoserine. Residues 148–177 (DTGPPAFYRSNSDNRRQNGRERLSSSSEKG) are disordered. Over residues 159 to 170 (SDNRRQNGRERL) the composition is skewed to basic and acidic residues. Ser172 is subject to Phosphoserine; by CK2. 2 NR C4-type zinc fingers span residues 190–210 (CAVC…CEGC) and 226–250 (CPAT…LRKC). The nuclear receptor DNA-binding region spans 190–255 (CAVCNDYASG…RLRKCYEVGM (66 aa)). The tract at residues 190–315 (CAVCNDYASG…TKKNSPALSL (126 aa)) is mediates interaction with DNTTIP2. The tract at residues 256–315 (MKGGIRKDRRGGRMLKHKRQRDDLEGRNEMGTSGDMRAANLWPSPLVIKHTKKNSPALSL) is hinge. At Arg265 the chain carries Asymmetric dimethylarginine; by PRMT1. The tract at residues 267-600 (GRMLKHKRQR…PEAEGFPNTI (334 aa)) is interaction with AKAP13. The tract at residues 269–600 (MLKHKRQRDD…PEAEGFPNTI (332 aa)) is self-association. One can recognise an NR LBD domain in the interval 316–552 (TADQMVSALL…DLLLEMLDAH (237 aa)). The segment at 316–600 (TADQMVSALL…PEAEGFPNTI (285 aa)) is transactivation AF-2. The 17beta-estradiol site is built by Glu358 and Arg399. Cys452 is lipidated: S-palmitoyl cysteine. His529 is a 17beta-estradiol binding site. Residue Tyr542 is modified to Phosphotyrosine; by Tyr-kinases. A disordered region spans residues 558 to 581 (ASRMGVPPEEPSQSQLTTTSSTSA). Positions 569-581 (SQSQLTTTSSTSA) are enriched in low complexity. An O-linked (GlcNAc) threonine glycan is attached at Thr576.

The protein belongs to the nuclear hormone receptor family. NR3 subfamily. As to quaternary structure, interacts with BCAS3. Binds DNA as a homodimer. Can form a heterodimer with ESR2. Interacts with coactivator NCOA5. Interacts with PELP1, the interaction is enhanced by 17-beta-estradiol; the interaction increases ESR1 transcriptional activity. Interacts with NCOA7; the interaction is ligand-inducible. Interacts with AKAP13, CUEDC2, HEXIM1, KDM5A, MAP1S, SMARD1, and UBE1C. Interacts with MUC1; the interaction is stimulated by 7 beta-estradiol (E2) and enhances ESR1-mediated transcription. Interacts with DNTTIP2, and UIMC1. Interacts with KMT2D/MLL2. Interacts with ATAD2; the interaction is enhanced by estradiol. Interacts with KIF18A and LDB1. Interacts with RLIM (via its C-terminus). Interacts with MACROD1. Interacts with SH2D4A and PLCG. Interacts with SH2D4A; the interaction blocks binding to PLCG and inhibits estrogen-induced cell proliferation. Interacts with DYNLL1. Interacts with CCDC62; the interaction requires estradiol and appears to enhance the transcription of target genes. Interacts with NR2C1; the interaction prevents homodimerization of ESR1 and suppresses its transcriptional activity and cell growth. Interacts with DNAAF4. Interacts with PRMT2. Interacts with RBFOX2. Interacts with EP300; the interaction is estrogen-dependent and enhanced by CITED1. Interacts with CITED1; the interaction is estrogen-dependent. Interacts with FAM120B, FOXL2, PHB2 and SLC30A9. Interacts with coactivators NCOA3 and NCOA6. Interacts with STK3/MST2 only in the presence of SAV1 and vice-versa. Binds to CSNK1D. Interacts with NCOA2; NCOA2 can interact with ESR1 AF-1 and AF-2 domains simultaneously and mediate their transcriptional synergy. Interacts with DDX5. Interacts with NCOA1; the interaction seems to require a self-association of N-terminal and C-terminal regions. Interacts with ZNF366, DDX17, NFKB1, RELA, SP1 and SP3. Interacts with NRIP1. Interacts with GPER1; the interaction occurs in an estrogen-dependent manner. Interacts with TRIP4 (ufmylated); estrogen dependent. Interacts with LMTK3; the interaction phosphorylates ESR1 (in vitro) and protects it against proteasomal degradation. Interacts with CCAR2 (via N-terminus) in a ligand-independent manner. Interacts with ZFHX3. Interacts with SFR1 in a ligand-dependent and -independent manner. Interacts with DCAF13, LATS1 and DCAF1; regulates ESR1 ubiquitination and ubiquitin-mediated proteasomal degradation. Interacts (via DNA-binding domain) with POU4F2 (C-terminus); this interaction increases the estrogen receptor ESR1 transcriptional activity in a DNA- and ligand 17-beta-estradiol-independent manner. Interacts with ESRRB isoform 1. Interacts with UBE3A and WBP2. Interacts with GTF2B. Interacts with RBM39. In the absence of hormonal ligand, interacts with TACC1. Interacts with PI3KR1 or PI3KR2 and PTK2/FAK1. Interacts with SRC. Interacts with BAG1; the interaction is promoted in the absence of estradiol (17-beta-estradiol/E2). Interacts with and ubiquitinated by STUB1; the interaction is promoted in the absence of estradiol (17-beta-estradiol/E2). Interacts with NEDD8. Phosphorylated by cyclin A/CDK2 and CK1. Phosphorylation probably enhances transcriptional activity. Dephosphorylation at Ser-123 by PPP5C inhibits its transactivation activity. Phosphorylated by LMTK3 (in vitro). Post-translationally, ubiquitinated; regulated by LATS1 via DCAF1 it leads to ESR1 proteasomal degradation. Deubiquitinated by OTUB1. Ubiquitinated by STUB1/CHIP; in the CA1 hippocampal region following loss of endogenous circulating estradiol (17-beta-estradiol/E2). Ubiquitinated by UBR5, leading to its degradation: UBR5 specifically recognizes and binds ligand-bound ESR1 when it is not associated with coactivators (NCOAs). In presence of NCOAs, the UBR5-degron is not accessible, preventing its ubiquitination and degradation. In terms of processing, palmitoylated at Cys-452 by ZDHHC7 and ZDHHC21. This modification is required for plasma membrane targeting and for rapid intracellular signaling via ERK and AKT kinases and cAMP generation, but not for signaling mediated by the nuclear hormone receptor. Dimethylated by PRMT1 at Arg-265. The methylation may favor cytoplasmic localization. Demethylated by JMJD6 at Arg-265. In terms of tissue distribution, expressed in the CA1 region of the hippocampus, expression decreases with age (at protein level). Expressed in the uterus (at protein level).

It localises to the nucleus. Its subcellular location is the cytoplasm. The protein resides in the golgi apparatus. It is found in the cell membrane. In terms of biological role, nuclear hormone receptor. The steroid hormones and their receptors are involved in the regulation of eukaryotic gene expression and affect cellular proliferation and differentiation in target tissues. Ligand-dependent nuclear transactivation involves either direct homodimer binding to a palindromic estrogen response element (ERE) sequence or association with other DNA-binding transcription factors, such as AP-1/c-Jun, c-Fos, ATF-2, Sp1 and Sp3, to mediate ERE-independent signaling. Ligand binding induces a conformational change allowing subsequent or combinatorial association with multiprotein coactivator complexes through LXXLL motifs of their respective components. Mutual transrepression occurs between the estrogen receptor (ER) and NF-kappa-B in a cell-type specific manner. Decreases NF-kappa-B DNA-binding activity and inhibits NF-kappa-B-mediated transcription from the IL6 promoter and displace RELA/p65 and associated coregulators from the promoter. Recruited to the NF-kappa-B response element of the CCL2 and IL8 promoters and can displace CREBBP. Present with NF-kappa-B components RELA/p65 and NFKB1/p50 on ERE sequences. Can also act synergistically with NF-kappa-B to activate transcription involving respective recruitment adjacent response elements; the function involves CREBBP. Can activate the transcriptional activity of TFF1. Also mediates membrane-initiated estrogen signaling involving various kinase cascades. Essential for MTA1-mediated transcriptional regulation of BRCA1 and BCAS3. Maintains neuronal survival in response to ischemic reperfusion injury when in the presence of circulating estradiol (17-beta-estradiol/E2). This is Estrogen receptor (Esr1) from Rattus norvegicus (Rat).